Here is a 384-residue protein sequence, read N- to C-terminus: Galactokinase (384 aa).

Position 35–38 (35–38 (EHTD)) interacts with substrate. Residues S69 and 125 to 131 (GAGLSSS) each bind ATP. Residues S131 and E163 each contribute to the Mg(2+) site. Residue D175 is the Proton acceptor of the active site. Y224 contacts substrate.

Belongs to the GHMP kinase family. GalK subfamily.

It localises to the cytoplasm. It carries out the reaction alpha-D-galactose + ATP = alpha-D-galactose 1-phosphate + ADP + H(+). It functions in the pathway carbohydrate metabolism; galactose metabolism. Its function is as follows. Catalyzes the transfer of the gamma-phosphate of ATP to D-galactose to form alpha-D-galactose-1-phosphate (Gal-1-P). The sequence is that of Galactokinase from Aliivibrio fischeri (strain MJ11) (Vibrio fischeri).